The sequence spans 620 residues: Ion-translocating oxidoreductase complex subunit C (620 aa).

2 4Fe-4S ferredoxin-type domains span residues 366 to 397 (TEMG…QQLY) and 407 to 436 (KARN…VQYY). Residues Cys377, Cys380, Cys383, Cys387, Cys416, Cys419, Cys422, and Cys426 each coordinate [4Fe-4S] cluster.

This sequence belongs to the 4Fe4S bacterial-type ferredoxin family. RnfC subfamily. As to quaternary structure, the complex is composed of six subunits: RnfA, RnfB, RnfC, RnfD, RnfE and RnfG. [4Fe-4S] cluster serves as cofactor.

Its subcellular location is the cell inner membrane. Its function is as follows. Part of a membrane-bound complex that couples electron transfer with translocation of ions across the membrane. The polypeptide is Ion-translocating oxidoreductase complex subunit C (Yersinia pestis bv. Antiqua (strain Antiqua)).